We begin with the raw amino-acid sequence, 322 residues long: Tyrosine recombinase XerC (322 aa).

The 91-residue stretch at 14–104 folds into the Core-binding (CB) domain; that stretch reads PDLREAAAAW…ALRSFARHLD (91 aa). Residues 125-311 form the Tyr recombinase domain; sequence RLPRPLPVAA…DSARLLSAFD (187 aa). Catalysis depends on residues Arg170, Lys195, His263, Arg266, and His289. Tyr298 (O-(3'-phospho-DNA)-tyrosine intermediate) is an active-site residue.

Belongs to the 'phage' integrase family. XerC subfamily. As to quaternary structure, forms a cyclic heterotetrameric complex composed of two molecules of XerC and two molecules of XerD.

The protein resides in the cytoplasm. Site-specific tyrosine recombinase, which acts by catalyzing the cutting and rejoining of the recombining DNA molecules. The XerC-XerD complex is essential to convert dimers of the bacterial chromosome into monomers to permit their segregation at cell division. It also contributes to the segregational stability of plasmids. The sequence is that of Tyrosine recombinase XerC from Methylobacterium nodulans (strain LMG 21967 / CNCM I-2342 / ORS 2060).